Reading from the N-terminus, the 146-residue chain is Ribonuclease H (146 aa).

Residues 1–141 enclose the RNase H type-1 domain; sequence MKHVDIFTDG…ADELARKGME (141 aa). Positions 9, 47, 69, and 133 each coordinate Mg(2+). The interval 123 to 146 is disordered; sequence HAGHPENERADELARKGMEPFKRR. Positions 125 to 146 are enriched in basic and acidic residues; it reads GHPENERADELARKGMEPFKRR.

It belongs to the RNase H family. Monomer. Requires Mg(2+) as cofactor.

Its subcellular location is the cytoplasm. The catalysed reaction is Endonucleolytic cleavage to 5'-phosphomonoester.. In terms of biological role, endonuclease that specifically degrades the RNA of RNA-DNA hybrids. In Agrobacterium fabrum (strain C58 / ATCC 33970) (Agrobacterium tumefaciens (strain C58)), this protein is Ribonuclease H.